A 355-amino-acid chain; its full sequence is GTPase Obg (355 aa).

The region spanning methionine 1–isoleucine 159 is the Obg domain. In terms of domain architecture, OBG-type G spans alanine 160–valine 327. GTP contacts are provided by residues glycine 166 to serine 173, phenylalanine 191 to histidine 195, aspartate 212 to glycine 215, serine 279 to aspartate 282, and serine 308 to alanine 310. Mg(2+) contacts are provided by serine 173 and threonine 193. The disordered stretch occupies residues glycine 333–leucine 355.

This sequence belongs to the TRAFAC class OBG-HflX-like GTPase superfamily. OBG GTPase family. As to quaternary structure, monomer. The cofactor is Mg(2+).

The protein localises to the cytoplasm. Functionally, an essential GTPase which binds GTP, GDP and possibly (p)ppGpp with moderate affinity, with high nucleotide exchange rates and a fairly low GTP hydrolysis rate. Plays a role in control of the cell cycle, stress response, ribosome biogenesis and in those bacteria that undergo differentiation, in morphogenesis control. The polypeptide is GTPase Obg (Agrobacterium fabrum (strain C58 / ATCC 33970) (Agrobacterium tumefaciens (strain C58))).